We begin with the raw amino-acid sequence, 225 residues long: Orotate phosphoribosyltransferase (225 aa).

5-phospho-alpha-D-ribose 1-diphosphate-binding positions include R107, K108, K111, and 133–141 (EDLTTDGGS). Residue T137 coordinates orotate.

It belongs to the purine/pyrimidine phosphoribosyltransferase family. PyrE subfamily. In terms of assembly, homodimer. It depends on Mg(2+) as a cofactor.

It catalyses the reaction orotidine 5'-phosphate + diphosphate = orotate + 5-phospho-alpha-D-ribose 1-diphosphate. It participates in pyrimidine metabolism; UMP biosynthesis via de novo pathway; UMP from orotate: step 1/2. Its function is as follows. Catalyzes the transfer of a ribosyl phosphate group from 5-phosphoribose 1-diphosphate to orotate, leading to the formation of orotidine monophosphate (OMP). This is Orotate phosphoribosyltransferase from Roseobacter denitrificans (strain ATCC 33942 / OCh 114) (Erythrobacter sp. (strain OCh 114)).